The primary structure comprises 617 residues: DNA mismatch repair protein MutL (617 aa).

Positions 363-394 are disordered; the sequence is YAPAYGARPPQPSAWSVDTSPHRPLDDGQNRF. Positions 382 to 392 are enriched in basic and acidic residues; sequence SPHRPLDDGQN.

It belongs to the DNA mismatch repair MutL/HexB family.

Its function is as follows. This protein is involved in the repair of mismatches in DNA. It is required for dam-dependent methyl-directed DNA mismatch repair. May act as a 'molecular matchmaker', a protein that promotes the formation of a stable complex between two or more DNA-binding proteins in an ATP-dependent manner without itself being part of a final effector complex. This is DNA mismatch repair protein MutL from Allorhizobium ampelinum (strain ATCC BAA-846 / DSM 112012 / S4) (Agrobacterium vitis (strain S4)).